A 311-amino-acid polypeptide reads, in one-letter code: Ribosomal RNA large subunit methyltransferase F (311 aa).

The protein belongs to the methyltransferase superfamily. METTL16/RlmF family.

It is found in the cytoplasm. The catalysed reaction is adenosine(1618) in 23S rRNA + S-adenosyl-L-methionine = N(6)-methyladenosine(1618) in 23S rRNA + S-adenosyl-L-homocysteine + H(+). In terms of biological role, specifically methylates the adenine in position 1618 of 23S rRNA. The sequence is that of Ribosomal RNA large subunit methyltransferase F from Pectobacterium carotovorum subsp. carotovorum (strain PC1).